A 539-amino-acid polypeptide reads, in one-letter code: CTP synthase (539 aa).

The segment at 1–268 is amidoligase domain; the sequence is MSFKCIFLTG…STFITEKLGL (268 aa). Residue Ser14 participates in CTP binding. Ser14 contributes to the UTP binding site. 15-20 contacts ATP; the sequence is SLGKGL. Tyr55 serves as a coordination point for L-glutamine. An ATP-binding site is contributed by Asp72. Mg(2+)-binding residues include Asp72 and Glu142. Residues 149 to 151, 188 to 193, and Lys224 contribute to the CTP site; these read DIE and KTKPTQ. Residues 188–193 and Lys224 contribute to the UTP site; that span reads KTKPTQ. The Glutamine amidotransferase type-1 domain occupies 294-533; sequence RIGLVGKYVQ…IQAAILYSRN (240 aa). Position 353 (Gly353) interacts with L-glutamine. The active-site Nucleophile; for glutamine hydrolysis is Cys380. Residues 381–384, Glu404, and Arg461 contribute to the L-glutamine site; that span reads LGMQ. Catalysis depends on residues His506 and Glu508.

The protein belongs to the CTP synthase family. Homotetramer.

The enzyme catalyses UTP + L-glutamine + ATP + H2O = CTP + L-glutamate + ADP + phosphate + 2 H(+). It carries out the reaction L-glutamine + H2O = L-glutamate + NH4(+). It catalyses the reaction UTP + NH4(+) + ATP = CTP + ADP + phosphate + 2 H(+). Its pathway is pyrimidine metabolism; CTP biosynthesis via de novo pathway; CTP from UDP: step 2/2. Its activity is regulated as follows. Allosterically activated by GTP, when glutamine is the substrate; GTP has no effect on the reaction when ammonia is the substrate. The allosteric effector GTP functions by stabilizing the protein conformation that binds the tetrahedral intermediate(s) formed during glutamine hydrolysis. Inhibited by the product CTP, via allosteric rather than competitive inhibition. Catalyzes the ATP-dependent amination of UTP to CTP with either L-glutamine or ammonia as the source of nitrogen. Regulates intracellular CTP levels through interactions with the four ribonucleotide triphosphates. The chain is CTP synthase from Chlamydia felis (strain Fe/C-56) (Chlamydophila felis).